Here is a 527-residue protein sequence, read N- to C-terminus: uncharacterized protein (527 aa).

Disordered stretches follow at residues 1–49 (MSSF…IKDE), 99–307 (DFNF…ATTT), 319–353 (TEINNNNSNSNNLPSIPIGNEKSKINDNQDEEDEN), and 382–419 (YINNDDGDDDDDDDENENENDSQPEEEYEENKQQQQQE). Acidic residues predominate over residues 8–17 (YDDESEEEDN). 2 stretches are compositionally biased toward low complexity: residues 18 to 44 (NNNNNNNNNNNNNNIINNNNNNNNSNN) and 99 to 115 (DFNFYNNNNNSNSNSNN). A compositionally biased stretch (basic and acidic residues) spans 141 to 150 (NEFRNPDLKN). Composition is skewed to low complexity over residues 167–178 (SSQNTTTTQQSS) and 186–222 (NNNNNNNNNNNNNNNNNNNNNNNNNNNNNNNNNNSNN). The segment covering 229-248 (DDKSKKINENENTVNKKDNI) has biased composition (basic and acidic residues). A compositionally biased stretch (basic residues) spans 283–296 (LRKKLLKNQPKTKK). Composition is skewed to low complexity over residues 297-307 (STTTTTTATTT) and 319-330 (TEINNNNSNSNN). Residues 386-410 (DDGDDDDDDDENENENDSQPEEEYE) are compositionally biased toward acidic residues.

This is an uncharacterized protein from Dictyostelium discoideum (Social amoeba).